The sequence spans 627 residues: LGDVPRTSGAIFVARPESNHPDRFGLFGAPPLEEGYVVLVGDGRLKQFPPPSEFLLSVWNRSRAARLVCCSIVLCCLCLTVFLYLSENMGQTVTTPLSLTLDHWKDVERTAHNQSVEIRKRRWVTLCSAEWPTFNVGWPRDGTFNPDIITQVKIKVFSSGPHGHPDQVPYIVTWEALAADPPPWVKPFVHPKPPPLLLPPSAPSLPPEPPFPTPPQSSLYPALTSPLNTKPRPQVLPDSGGPLIDLLTEDPPPYRDPGPSSSDGNGGSGEVAPTEGAPDSSPMVSRLRGRREPPVADSTTSQAFPLRQGGNGQFQYWPFSSSDLYNWKNNNPSFSEDPAKLTALIESVLLTHQPTWDDCQQLLGTLLTGEEKQRVLLEARKAVRGEDGRPTQLPNDINDAFPLERPDWDYNTQRGRNHLVHYRQLLLAGLQNAGRSPTNLAKVKGITQGPNESPSAFLERLKEAYRRYTPYDPEDPGQETNVAMSFIWQSAPDIGRKLERLEDLKSKTLGDLVREAEKIFNKRETPEEREERIRRETEEKEERRRAEDEQREKERDRRRHREMSKLLATVISGQRQDRQGGERRRPQLDHDQCAYCKEKGHWARDCPKKPRGPRGPRPQASLLTLDD.

The Cytoplasmic portion of the chain corresponds to 1-63 (LGDVPRTSGA…FLLSVWNRSR (63 aa)). Residues 64-86 (AARLVCCSIVLCCLCLTVFLYLS) traverse the membrane as a helical segment. At 87-627 (ENMGQTVTTP…PQASLLTLDD (541 aa)) the chain is on the extracellular side. A glycan (N-linked (GlcNAc...) asparagine; by host) is linked at asparagine 113. Positions 199-215 (PPSAPSLPPEPPFPTPP) are enriched in pro residues. Disordered stretches follow at residues 199–310 (PPSA…RQGG) and 523–627 (RETP…TLDD). Basic and acidic residues-rich tracts occupy residues 523–555 (RETP…EKER) and 575–608 (RQDR…DCPK). The segment at 593 to 608 (CAYCKEKGHWARDCPK) adopts a CCHC-type zinc-finger fold.

In terms of processing, glycosylated by host. Post-translationally, cleaved by host near the middle of the molecule, releasing the c-terminal half containing capsid and nucleoprotein domains op GAG.

It is found in the host cell membrane. Functionally, plays a role in viral particle release. Presumably acts by facilitating the fission of the virion bud at the cell surface. May prevent the antiviral activity of murine APOBEC3. This chain is Glyco-Gag protein, found in Friend murine leukemia virus (isolate 57) (FrMLV).